The following is a 204-amino-acid chain: UPF0637 protein lin1053 (204 aa).

The protein belongs to the UPF0637 family.

The polypeptide is UPF0637 protein lin1053 (Listeria innocua serovar 6a (strain ATCC BAA-680 / CLIP 11262)).